The sequence spans 332 residues: Anthranilate phosphoribosyltransferase (332 aa).

5-phospho-alpha-D-ribose 1-diphosphate-binding positions include glycine 79, 82–83 (GD), serine 87, 89–92 (NIST), 107–115 (KHGNRSVSS), and serine 119. Position 79 (glycine 79) interacts with anthranilate. Serine 91 serves as a coordination point for Mg(2+). Residue asparagine 110 participates in anthranilate binding. Residue arginine 165 coordinates anthranilate. Residues aspartate 223 and glutamate 224 each contribute to the Mg(2+) site.

This sequence belongs to the anthranilate phosphoribosyltransferase family. Homodimer. Requires Mg(2+) as cofactor.

The enzyme catalyses N-(5-phospho-beta-D-ribosyl)anthranilate + diphosphate = 5-phospho-alpha-D-ribose 1-diphosphate + anthranilate. It functions in the pathway amino-acid biosynthesis; L-tryptophan biosynthesis; L-tryptophan from chorismate: step 2/5. Catalyzes the transfer of the phosphoribosyl group of 5-phosphorylribose-1-pyrophosphate (PRPP) to anthranilate to yield N-(5'-phosphoribosyl)-anthranilate (PRA). In Serratia proteamaculans (strain 568), this protein is Anthranilate phosphoribosyltransferase.